Here is a 451-residue protein sequence, read N- to C-terminus: Sensor histidine kinase CssS (451 aa).

Residues 1 to 9 are Cytoplasmic-facing; sequence MKNKPLAFQ. The helical transmembrane segment at 10 to 30 threads the bilayer; it reads IWVVISGILLAISILLLVLFS. At 31 to 165 the chain is on the extracellular side; that stretch reads NTLRDFFTNE…RDDLAYTLFK (135 aa). A helical membrane pass occupies residues 166–186; the sequence is QLLFIIAVVILLSWIPAIWLA. The region spanning 187–239 is the HAMP domain; sequence KYLSRPLVSFEKHVKRISEQDWDDPVKVDRKDEIGKLGHTIEEMRQKLVQKDE. Residues 187 to 451 lie on the Cytoplasmic side of the membrane; sequence KYLSRPLVSF…GVTYRIAVPK (265 aa). Positions 247–451 constitute a Histidine kinase domain; sequence NISHDLKTPV…GVTYRIAVPK (205 aa). Residue histidine 250 is modified to Phosphohistidine; by autocatalysis.

It is found in the cell membrane. It catalyses the reaction ATP + protein L-histidine = ADP + protein N-phospho-L-histidine.. Functionally, member of the two-component regulatory system CssS/CssR required to control the cellular response to secretion stress. Required for the transcription of htrA. Could detect misfolded proteins at the membrane-cell wall interface and then activate CssR by phosphorylation. The protein is Sensor histidine kinase CssS (cssS) of Bacillus subtilis (strain 168).